Reading from the N-terminus, the 463-residue chain is Cytochrome P450 4d8 (463 aa).

Residues glutamate 267 and cysteine 409 each coordinate heme.

This sequence belongs to the cytochrome P450 family. The cofactor is heme.

The protein resides in the endoplasmic reticulum membrane. It localises to the microsome membrane. In terms of biological role, may be involved in the metabolism of insect hormones and in the breakdown of synthetic insecticides. This is Cytochrome P450 4d8 (Cyp4d8) from Drosophila melanogaster (Fruit fly).